A 199-amino-acid polypeptide reads, in one-letter code: N-(5'-phosphoribosyl)anthranilate isomerase (199 aa).

The protein belongs to the TrpF family.

It carries out the reaction N-(5-phospho-beta-D-ribosyl)anthranilate = 1-(2-carboxyphenylamino)-1-deoxy-D-ribulose 5-phosphate. It participates in amino-acid biosynthesis; L-tryptophan biosynthesis; L-tryptophan from chorismate: step 3/5. In Sulfolobus acidocaldarius (strain ATCC 33909 / DSM 639 / JCM 8929 / NBRC 15157 / NCIMB 11770), this protein is N-(5'-phosphoribosyl)anthranilate isomerase.